A 189-amino-acid polypeptide reads, in one-letter code: uncharacterized protein (189 aa).

The HTH tetR-type domain maps to 9–69 (ADTGGRILRA…SMLTSHIADV (61 aa)). The segment at residues 32 to 51 (TLAEIARRAGVSRPTVYRRW) is a DNA-binding region (H-T-H motif).

This is an uncharacterized protein from Mycobacterium tuberculosis (strain CDC 1551 / Oshkosh).